The primary structure comprises 135 residues: Small ribosomal subunit protein uS11 (135 aa).

It belongs to the universal ribosomal protein uS11 family. Part of the 30S ribosomal subunit. Interacts with proteins S7 and S18. Binds to IF-3.

Functionally, located on the platform of the 30S subunit, it bridges several disparate RNA helices of the 16S rRNA. Forms part of the Shine-Dalgarno cleft in the 70S ribosome. In Polynucleobacter necessarius subsp. necessarius (strain STIR1), this protein is Small ribosomal subunit protein uS11.